The following is a 195-amino-acid chain: ATP-dependent Clp protease proteolytic subunit (195 aa).

Serine 97 acts as the Nucleophile in catalysis. Residue histidine 122 is part of the active site.

This sequence belongs to the peptidase S14 family. Fourteen ClpP subunits assemble into 2 heptameric rings which stack back to back to give a disk-like structure with a central cavity, resembling the structure of eukaryotic proteasomes.

It is found in the cytoplasm. It catalyses the reaction Hydrolysis of proteins to small peptides in the presence of ATP and magnesium. alpha-casein is the usual test substrate. In the absence of ATP, only oligopeptides shorter than five residues are hydrolyzed (such as succinyl-Leu-Tyr-|-NHMec, and Leu-Tyr-Leu-|-Tyr-Trp, in which cleavage of the -Tyr-|-Leu- and -Tyr-|-Trp bonds also occurs).. Functionally, cleaves peptides in various proteins in a process that requires ATP hydrolysis. Has a chymotrypsin-like activity. Plays a major role in the degradation of misfolded proteins. The sequence is that of ATP-dependent Clp protease proteolytic subunit from Lactobacillus acidophilus (strain ATCC 700396 / NCK56 / N2 / NCFM).